Reading from the N-terminus, the 360-residue chain is NAD(P)H-quinone oxidoreductase subunit 1, chloroplastic (360 aa).

A run of 9 helical transmembrane segments spans residues Ile-27–Ile-47, Phe-98–Phe-118, Ile-129–Gly-149, Ala-165–Leu-185, Phe-203–Leu-223, Tyr-248–Ser-268, Leu-269–Leu-289, Ile-297–Ile-317, and Phe-340–Leu-360.

This sequence belongs to the complex I subunit 1 family. As to quaternary structure, NDH is composed of at least 16 different subunits, 5 of which are encoded in the nucleus.

It is found in the plastid. Its subcellular location is the chloroplast thylakoid membrane. It catalyses the reaction a plastoquinone + NADH + (n+1) H(+)(in) = a plastoquinol + NAD(+) + n H(+)(out). It carries out the reaction a plastoquinone + NADPH + (n+1) H(+)(in) = a plastoquinol + NADP(+) + n H(+)(out). Functionally, NDH shuttles electrons from NAD(P)H:plastoquinone, via FMN and iron-sulfur (Fe-S) centers, to quinones in the photosynthetic chain and possibly in a chloroplast respiratory chain. The immediate electron acceptor for the enzyme in this species is believed to be plastoquinone. Couples the redox reaction to proton translocation, and thus conserves the redox energy in a proton gradient. The sequence is that of NAD(P)H-quinone oxidoreductase subunit 1, chloroplastic from Barbarea verna (Land cress).